The sequence spans 396 residues: Ornithine aminotransferase (396 aa).

Lys255 is modified (N6-(pyridoxal phosphate)lysine).

Belongs to the class-III pyridoxal-phosphate-dependent aminotransferase family. OAT subfamily. It depends on pyridoxal 5'-phosphate as a cofactor.

The protein localises to the cytoplasm. The enzyme catalyses a 2-oxocarboxylate + L-ornithine = L-glutamate 5-semialdehyde + an L-alpha-amino acid. The protein operates within amino-acid biosynthesis; L-proline biosynthesis; L-glutamate 5-semialdehyde from L-ornithine: step 1/1. In terms of biological role, catalyzes the interconversion of ornithine to glutamate semialdehyde. The chain is Ornithine aminotransferase from Bacillus cereus (strain 03BB102).